A 322-amino-acid polypeptide reads, in one-letter code: ATP-dependent 6-phosphofructokinase (322 aa).

An ATP-binding site is contributed by Gly-11. ADP is bound at residue 21–25 (RAVAR). Residues 72 to 73 (RY) and 102 to 105 (GDGS) each bind ATP. Residue Asp-103 participates in Mg(2+) binding. Residue 125–127 (TID) coordinates substrate. The active-site Proton acceptor is Asp-127. Arg-154 serves as a coordination point for ADP. Substrate-binding positions include Arg-162 and 169–171 (MGR). Residues 185–187 (GAD) and 213–215 (KDY) contribute to the ADP site. Residues Glu-222, Arg-246, and 252–255 (HVQR) each bind substrate.

Belongs to the phosphofructokinase type A (PFKA) family. ATP-dependent PFK group I subfamily. Prokaryotic clade 'B1' sub-subfamily. As to quaternary structure, homotetramer. The cofactor is Mg(2+).

It is found in the cytoplasm. The enzyme catalyses beta-D-fructose 6-phosphate + ATP = beta-D-fructose 1,6-bisphosphate + ADP + H(+). Its pathway is carbohydrate degradation; glycolysis; D-glyceraldehyde 3-phosphate and glycerone phosphate from D-glucose: step 3/4. With respect to regulation, allosterically activated by ADP and other diphosphonucleosides, and allosterically inhibited by phosphoenolpyruvate. In terms of biological role, catalyzes the phosphorylation of D-fructose 6-phosphate to fructose 1,6-bisphosphate by ATP, the first committing step of glycolysis. This Pediococcus pentosaceus (strain ATCC 25745 / CCUG 21536 / LMG 10740 / 183-1w) protein is ATP-dependent 6-phosphofructokinase.